Reading from the N-terminus, the 798-residue chain is Acetyl-CoA decarbonylase/synthase complex subunit alpha 2 (798 aa).

Positions 65, 68, 69, 71, 76, and 86 each coordinate [4Fe-4S] cluster. Histidine 109 is a CO binding site. Residues histidine 246, cysteine 274, and cysteine 313 each contribute to the [Ni-4Fe-4S] cluster site. 2 consecutive 4Fe-4S ferredoxin-type domains span residues 395–424 (EEQF…IGEA) and 434–463 (SKLE…IDMY). Residues cysteine 405, cysteine 408, cysteine 411, cysteine 415, cysteine 443, cysteine 446, cysteine 449, and cysteine 453 each contribute to the [4Fe-4S] cluster site. [Ni-4Fe-4S] cluster is bound by residues cysteine 511, cysteine 540, and cysteine 575.

Belongs to the Ni-containing carbon monoxide dehydrogenase family. Heterotetramer of two alpha and two epsilon subunits. The ACDS complex is made up of alpha, epsilon, beta, gamma and delta subunits with a probable stoichiometry of (alpha(2)epsilon(2))(4)-beta(8)-(gamma(1)delta(1))(8). Requires [4Fe-4S] cluster as cofactor. [Ni-4Fe-4S] cluster serves as cofactor.

It carries out the reaction CO + 2 oxidized [2Fe-2S]-[ferredoxin] + H2O = 2 reduced [2Fe-2S]-[ferredoxin] + CO2 + 2 H(+). Functionally, part of the ACDS complex that catalyzes the reversible cleavage of acetyl-CoA, allowing autotrophic growth from CO(2). The alpha-epsilon subcomponent functions as a carbon monoxide dehydrogenase. The protein is Acetyl-CoA decarbonylase/synthase complex subunit alpha 2 of Archaeoglobus fulgidus (strain ATCC 49558 / DSM 4304 / JCM 9628 / NBRC 100126 / VC-16).